Reading from the N-terminus, the 335-residue chain is Transcription factor IIIA (335 aa).

C2H2-type zinc fingers lie at residues 13-37, 43-67, 73-98, 105-129, 135-159, 162-188, 192-214, 221-246, and 252-276; these read YICSFADCSASYNKNWKLQAHLCKH, FPCTVEGCGKGFVTLFHLTRHSMTH, CKCDAPDCDLSFTTMTNLRKHYQRAH, YECYFADCGQTFKKHNQLKLHQYIH, FKCNHEGCDKSFSSPSRLKRHEKVH, YPCQKDSSCSFVGKTWTEYMKHLAASH, TICDVCNRKFKNKTHLKDHKRTH, YKCPRDGCDRTYTKKFGLQSHILSFH, and FACGHPGCGKTFAMKQSLDRHANTH. A compositionally biased stretch (basic and acidic residues) spans 269–280; sequence LDRHANTHDPEK. Residues 269-335 form a disordered region; it reads LDRHANTHDP…ATAMQNLSIK (67 aa). Residues 281–292 show a composition bias toward basic residues; that stretch reads KKMKKPRPKKSL.

The protein localises to the nucleus. Involved in ribosomal large subunit biogenesis. Interacts with the internal control region (ICR) of approximately 50 bases within the 5S RNA genes, is required for correct transcription of these genes by RNA polymerase III. Also binds the transcribed 5S RNA's. The sequence is that of Transcription factor IIIA (gtf3a) from Lithobates pipiens (Northern leopard frog).